A 454-amino-acid chain; its full sequence is MCAAQMPPLAHIFRGTFVHSTWTCPMEVLRDHLLGVSDSGKIVFLEEASQQEKLAKEWCFKPCEIRELSHHEFFMPGLVDTHIHASQYSFAGSSIDLPLLEWLTKYTFPAEHRFQNIDFAEEVYTRVVRRTLKNGTTTACYFATIHTDSSLLLADITDKFGQRAFVGKVCMDLNDTFPEYKETTEESIKETERFVSEMLQKNYSRVKPIVTPRFSLSCSETLMGELGNIAKTRDLHIQSHISENRDEVEAVKNLYPSYKNYTSVYDKNNLLTNKTVMAHGCYLSAEELNVFHERGASIAHCPNSNLSLSSGFLNVLEVLKHEVKIGLGTDVAGGYSYSMLDAIRRAVMVSNILLINKVNEKSLTLKEVFRLATLGGSQALGLDGEIGNFEVGKEFDAILINPKASDSPIDLFYGDFFGDISEAVIQKFLYLGDDRNIEEVYVGGKQVVPFSSSV.

The Zn(2+) site is built by His82 and His84. Residues 84–87 (HASQ), 213–214 (RF), 240–243 (HISE), and Asp330 each bind substrate. 2 residues coordinate Zn(2+): His240 and Asp330. Residue Ser453 is modified to Phosphoserine.

Belongs to the metallo-dependent hydrolases superfamily. ATZ/TRZ family. In terms of assembly, homodimer. Requires Zn(2+) as cofactor.

It carries out the reaction guanine + H2O + H(+) = xanthine + NH4(+). It functions in the pathway purine metabolism; guanine degradation; xanthine from guanine: step 1/1. In terms of biological role, catalyzes the hydrolytic deamination of guanine, producing xanthine and ammonia. In Homo sapiens (Human), this protein is Guanine deaminase.